Consider the following 285-residue polypeptide: Pantothenate synthetase (285 aa).

Residue 30 to 37 (MGFLHEGH) participates in ATP binding. Catalysis depends on His-37, which acts as the Proton donor. Residue Gln-61 coordinates (R)-pantoate. Gln-61 provides a ligand contact to beta-alanine. 147–150 (GQKD) provides a ligand contact to ATP. Gln-153 provides a ligand contact to (R)-pantoate. Residues Val-176 and 184–187 (KSSR) each bind ATP.

Belongs to the pantothenate synthetase family. In terms of assembly, homodimer.

The protein resides in the cytoplasm. It carries out the reaction (R)-pantoate + beta-alanine + ATP = (R)-pantothenate + AMP + diphosphate + H(+). It functions in the pathway cofactor biosynthesis; (R)-pantothenate biosynthesis; (R)-pantothenate from (R)-pantoate and beta-alanine: step 1/1. Catalyzes the condensation of pantoate with beta-alanine in an ATP-dependent reaction via a pantoyl-adenylate intermediate. The sequence is that of Pantothenate synthetase from Listeria welshimeri serovar 6b (strain ATCC 35897 / DSM 20650 / CCUG 15529 / CIP 8149 / NCTC 11857 / SLCC 5334 / V8).